The sequence spans 240 residues: 14-3-3 protein 3 (240 aa).

Belongs to the 14-3-3 family. Interacts with coactosin. Interacts with ACTO/actophorin.

The protein resides in the cytoplasm. It localises to the cell projection. The protein localises to the phagocytic cup. Its function is as follows. Adapter protein which is required for phagocytosis and motility, probably by regulating actin cytoskeleton dynamics. During phagocytosis, plays a role in the initiation and/or formation of the phagocytic cup and is involved in the recruitment of the actin binding protein coactosin to the phagocytic cup. In Entamoeba histolytica (strain ATCC 30459 / HM-1:IMSS / ABRM), this protein is 14-3-3 protein 3.